We begin with the raw amino-acid sequence, 701 residues long: Peptide transporter 3 (701 aa).

Transmembrane regions (helical) follow at residues 29 to 49 (FSFYGMKTILFIYLITEHEFS), 55 to 75 (FIYHLFTCIAYLTPLIGSIMA), 91 to 111 (IYVVGHVLLSLGAVPFLSYPI), 119 to 139 (GLFVIAFATGCIKPCVSAFAA), 154 to 174 (FSFFYFAINGGSLFAIIITPI), 188 to 208 (FPLAFGVPGVLMLLALILFLM), 269 to 289 (GLLNVAVIFCPLIFFWALFDQ), 318 to 338 (INPVCVLILVPIFEGWVYPAL), and 351 to 371 (AVGGLLTAFSFAIAGVLQLKV). 2 N-linked (GlcNAc...) asparagine glycosylation sites follow: Asn-391 and Asn-432. The next 3 membrane-spanning stretches (helical) occupy residues 575 to 595 (ILWSLPQYIIITLGEVLLSVT), 611 to 631 (VLTAMWLLTVFAGNLIDMMIS), and 641 to 661 (LEFFFYSTLMVIVMGVFILLA).

It belongs to the major facilitator superfamily. Proton-dependent oligopeptide transporter (POT/PTR) (TC 2.A.17) family. In terms of tissue distribution, expressed in the AVA interneuron.

It localises to the membrane. In terms of biological role, neuron-specific, H(+)-coupled oligopeptide transporter with broad specificity towards di- and tripeptides in a Na(+) and Cl(-)-independent manner. Shows H(+) channel activity in the absence of peptide substrates. This Caenorhabditis elegans protein is Peptide transporter 3 (pept-3).